The chain runs to 312 residues: RNA pseudouridylate synthase domain-containing protein 1 (312 aa).

Methionine 1 is modified (N-acetylmethionine). Aspartate 67 is an active-site residue. Residues 256–298 (ATPDPDPEDRGPRPGSPSALLPGPGRPPPPPTKPPETEAQRGP) form a disordered region. Residues 279–289 (PGRPPPPPTKP) are compositionally biased toward pro residues.

The protein belongs to the pseudouridine synthase RluA family.

This chain is RNA pseudouridylate synthase domain-containing protein 1 (RPUSD1), found in Homo sapiens (Human).